A 1288-amino-acid polypeptide reads, in one-letter code: Photoreceptor cilium actin regulator (1288 aa).

The N-myristoyl glycine moiety is linked to residue glycine 2. Residue cysteine 3 is the site of S-palmitoyl cysteine attachment. Disordered regions lie at residues methionine 78–arginine 147, glutamine 368–proline 401, glutamine 423–serine 453, proline 467–alanine 527, aspartate 563–glutamate 605, glutamine 686–proline 707, alanine 813–glutamine 1109, glutamate 1132–proline 1169, and leucine 1190–serine 1288. 3 stretches are compositionally biased toward polar residues: residues threonine 96–histidine 109, serine 382–proline 401, and cysteine 434–serine 453. Acidic residues predominate over residues aspartate 483–aspartate 495. Polar residues-rich tracts occupy residues serine 848 to asparagine 857, serine 894 to histidine 904, proline 927 to lysine 946, and proline 966 to serine 976. Low complexity predominate over residues proline 1018 to threonine 1028. 2 stretches are compositionally biased toward pro residues: residues proline 1051–serine 1063 and proline 1071–serine 1094. Basic and acidic residues predominate over residues glutamine 1097–glutamate 1106. The segment covering aspartate 1209–glutamate 1226 has biased composition (polar residues). Residues arginine 1268–glutamine 1277 are compositionally biased toward basic and acidic residues. The span at proline 1278–serine 1288 shows a compositional bias: polar residues.

Specifically expressed in retina.

It is found in the cell projection. It localises to the cilium. Its subcellular location is the photoreceptor outer segment. The protein resides in the photoreceptor inner segment. Functionally, plays an essential role for normal photoreceptor cell maintenance and vision. This chain is Photoreceptor cilium actin regulator, found in Homo sapiens (Human).